The chain runs to 455 residues: Virion host shutoff protein (455 aa).

This sequence belongs to the herpesviridae VHS protein family.

It is found in the virion. Its function is as follows. Minor structural protein that acts as an endoribonuclease during lytic infection. Degrades host mRNAs in the cytoplasm by cutting them at preferred sites, including some in regions of translation initiation. This chain is Virion host shutoff protein (17), found in Homo sapiens (Human).